A 475-amino-acid chain; its full sequence is Pentatricopeptide repeat-containing protein At1g29710, mitochondrial (475 aa).

The transit peptide at 1–37 (MVRLWCGKLRLWKPYLALATQSRNSWFCSGGGAPSHH) directs the protein to the mitochondrion. PPR repeat units lie at residues 83-117 (AQNV…GYAM), 118-148 (DLIR…IIAL), 153-183 (DVGA…MPEW), 184-218 (NSGT…GNKP), 219-254 (NGEI…GIVP), and 255-285 (SMEH…MPME). Residues 350-380 (YFYSTFRPVDSSHPQMNIIYETLMSLRSQLK) form a type E(+) motif region. The interval 381 to 475 (EMGYVPDTRY…NGVCRCNNLW (95 aa)) is type DYW motif.

It belongs to the PPR family. PCMP-H subfamily.

Its subcellular location is the mitochondrion. The polypeptide is Pentatricopeptide repeat-containing protein At1g29710, mitochondrial (PCMP-H67) (Arabidopsis thaliana (Mouse-ear cress)).